The sequence spans 199 residues: Holliday junction resolvase RecU (199 aa).

Residues Thr82, Asp84, Glu97, and Gln116 each contribute to the Mg(2+) site.

Belongs to the RecU family. The cofactor is Mg(2+).

The protein localises to the cytoplasm. It catalyses the reaction Endonucleolytic cleavage at a junction such as a reciprocal single-stranded crossover between two homologous DNA duplexes (Holliday junction).. In terms of biological role, endonuclease that resolves Holliday junction intermediates in genetic recombination. Cleaves mobile four-strand junctions by introducing symmetrical nicks in paired strands. Promotes annealing of linear ssDNA with homologous dsDNA. Required for DNA repair, homologous recombination and chromosome segregation. This is Holliday junction resolvase RecU from Streptococcus pyogenes serotype M1.